Reading from the N-terminus, the 182-residue chain is CASP-like protein 5B1 (182 aa).

The segment at 1-20 (GDASHAVDHPIGGHPEHEHD) is disordered. The Cytoplasmic segment spans residues 1 to 41 (GDASHAVDHPIGGHPEHEHDLREEEGPLIFPMKDLPGTPGT). Residues 42 to 62 (VGGLALRMGQFIFAAASVVIM) form a helical membrane-spanning segment. Topologically, residues 63 to 73 (VTSDEFINFTA) are extracellular. N-linked (GlcNAc...) asparagine glycosylation is present at N70. Residues 74 to 94 (FCYLAAAMALQFLWSFVLATI) form a helical membrane-spanning segment. The Cytoplasmic portion of the chain corresponds to 95-108 (DVYALLIKRGLPNS). Residues 109–129 (ILLSLFVVGDWVTATLSLAAA) traverse the membrane as a helical segment. Topologically, residues 130–159 (CSTAGITVLFDKDLNYCDQMHCRRYQLSAT) are extracellular. A helical membrane pass occupies residues 160 to 180 (MAFFSWVLIAISSLITLLLLV). Over 181-182 (SE) the chain is Cytoplasmic.

This sequence belongs to the Casparian strip membrane proteins (CASP) family. As to quaternary structure, homodimer and heterodimers.

The protein localises to the cell membrane. This chain is CASP-like protein 5B1, found in Picea sitchensis (Sitka spruce).